Here is a 74-residue protein sequence, read N- to C-terminus: Conotoxin VxVIA (74 aa).

Residues 1–22 (MKLTCVLIIAVLFLTAYQLATA) form the signal peptide. Residues 23 to 47 (ASHAKGKQKHRALRPADKHFRFTKR) constitute a propeptide that is removed on maturation. Cystine bridges form between C48–C62, C55–C66, and C61–C73.

In terms of tissue distribution, expressed by the venom duct.

Its subcellular location is the secreted. Its function is as follows. When injected intracranially in mice, induces a series of symptoms such as quivering, climbing, scratching, barrel rolling and paralysis of limbs. Unexpectedly, no effect is observed on ionic currents when tested on locust DUM neuron. This Conus vexillum (Flag cone) protein is Conotoxin VxVIA.